Here is a 153-residue protein sequence, read N- to C-terminus: Aspartate carbamoyltransferase regulatory chain (153 aa).

Residues Cys-109, Cys-114, Cys-138, and Cys-141 each contribute to the Zn(2+) site.

This sequence belongs to the PyrI family. Contains catalytic and regulatory chains. Requires Zn(2+) as cofactor.

In terms of biological role, involved in allosteric regulation of aspartate carbamoyltransferase. The sequence is that of Aspartate carbamoyltransferase regulatory chain from Escherichia coli (strain ATCC 8739 / DSM 1576 / NBRC 3972 / NCIMB 8545 / WDCM 00012 / Crooks).